The primary structure comprises 301 residues: 4-hydroxy-tetrahydrodipicolinate synthase (301 aa).

Pyruvate is bound at residue Thr46. Catalysis depends on Tyr134, which acts as the Proton donor/acceptor. Lys162 (schiff-base intermediate with substrate) is an active-site residue. Pyruvate is bound at residue Ile203.

Belongs to the DapA family. As to quaternary structure, homotetramer; dimer of dimers.

Its subcellular location is the cytoplasm. The enzyme catalyses L-aspartate 4-semialdehyde + pyruvate = (2S,4S)-4-hydroxy-2,3,4,5-tetrahydrodipicolinate + H2O + H(+). It functions in the pathway amino-acid biosynthesis; L-lysine biosynthesis via DAP pathway; (S)-tetrahydrodipicolinate from L-aspartate: step 3/4. In terms of biological role, catalyzes the condensation of (S)-aspartate-beta-semialdehyde [(S)-ASA] and pyruvate to 4-hydroxy-tetrahydrodipicolinate (HTPA). The sequence is that of 4-hydroxy-tetrahydrodipicolinate synthase from Anaplasma marginale (strain Florida).